A 417-amino-acid chain; its full sequence is MAP kinase-interacting serine/threonine-protein kinase 1 (417 aa).

Positions 1–20 are disordered; it reads MVSSQPVPIDDGGKRRKKKR. A Protein kinase domain is found at 37 to 321; the sequence is RLTDELLGEG…AAQVLQHPWL (285 aa). ATP is bound by residues 43 to 51 and K66; that span reads LGEGAYAKV. D158 (proton acceptor) is an active-site residue. The disordered stretch occupies residues 397–417; sequence AHARKGGSHLTHTTVTSQGAT. The span at 406–417 shows a compositional bias: polar residues; sequence LTHTTVTSQGAT.

It belongs to the protein kinase superfamily. CAMK Ser/Thr protein kinase family. Requires Mg(2+) as cofactor.

The enzyme catalyses L-seryl-[protein] + ATP = O-phospho-L-seryl-[protein] + ADP + H(+). It carries out the reaction L-threonyl-[protein] + ATP = O-phospho-L-threonyl-[protein] + ADP + H(+). Functionally, may play a role in the response to environmental stress and cytokines. Appears to regulate translation by phosphorylating EIF4E, thus increasing the affinity of this protein for the 7-methylguanosine-containing mRNA cap. The protein is MAP kinase-interacting serine/threonine-protein kinase 1 (mknk1) of Xenopus tropicalis (Western clawed frog).